The primary structure comprises 319 residues: Probable cystathionine gamma-synthase (319 aa).

Position 197 is an N6-(pyridoxal phosphate)lysine (Lys197).

The protein belongs to the trans-sulfuration enzymes family. As to quaternary structure, homotetramer. Requires pyridoxal 5'-phosphate as cofactor.

It localises to the cytoplasm. The catalysed reaction is O-succinyl-L-homoserine + L-cysteine = L,L-cystathionine + succinate + H(+). In terms of biological role, catalyzes the formation of L-cystathionine from O-succinyl-L-homoserine (OSHS) and L-cysteine, via a gamma-replacement reaction. In the absence of thiol, catalyzes gamma-elimination to form 2-oxobutanoate, succinate and ammonia. This Herpetosiphon aurantiacus (Herpetosiphon giganteus) protein is Probable cystathionine gamma-synthase (metB).